Reading from the N-terminus, the 222-residue chain is Probable transaldolase (222 aa).

The active-site Schiff-base intermediate with substrate is K91.

It belongs to the transaldolase family. Type 3B subfamily.

Its subcellular location is the cytoplasm. It carries out the reaction D-sedoheptulose 7-phosphate + D-glyceraldehyde 3-phosphate = D-erythrose 4-phosphate + beta-D-fructose 6-phosphate. The protein operates within carbohydrate degradation; pentose phosphate pathway; D-glyceraldehyde 3-phosphate and beta-D-fructose 6-phosphate from D-ribose 5-phosphate and D-xylulose 5-phosphate (non-oxidative stage): step 2/3. Its function is as follows. Transaldolase is important for the balance of metabolites in the pentose-phosphate pathway. This chain is Probable transaldolase, found in Chlorobaculum parvum (strain DSM 263 / NCIMB 8327) (Chlorobium vibrioforme subsp. thiosulfatophilum).